The chain runs to 103 residues: NADH-quinone oxidoreductase subunit K (103 aa).

3 helical membrane-spanning segments follow: residues 7-27 (TEHGLYLAAALFILGLIGVLV), 31-51 (LIFMLLSLEIMLNATGLAFIV), and 65-85 (FMLILTLAAAEAAVALALILL).

It belongs to the complex I subunit 4L family. NDH-1 is composed of 14 different subunits. Subunits NuoA, H, J, K, L, M, N constitute the membrane sector of the complex.

The protein localises to the cell inner membrane. The enzyme catalyses a quinone + NADH + 5 H(+)(in) = a quinol + NAD(+) + 4 H(+)(out). Its function is as follows. NDH-1 shuttles electrons from NADH, via FMN and iron-sulfur (Fe-S) centers, to quinones in the respiratory chain. The immediate electron acceptor for the enzyme in this species is believed to be ubiquinone. Couples the redox reaction to proton translocation (for every two electrons transferred, four hydrogen ions are translocated across the cytoplasmic membrane), and thus conserves the redox energy in a proton gradient. The protein is NADH-quinone oxidoreductase subunit K of Nitrosococcus oceani (strain ATCC 19707 / BCRC 17464 / JCM 30415 / NCIMB 11848 / C-107).